A 248-amino-acid chain; its full sequence is Pulmonary surfactant-associated protein A1 (248 aa).

The N-terminal stretch at 1–20 (MWLCPLALNLILMAASGAVC) is a signal peptide. A Collagen-like domain is found at 28-100 (GSPGIPGTPG…PGERGPPGLP (73 aa)). Residues Pro30, Pro33, Pro36, Pro42, Pro54, Pro57, Pro63, Pro67, and Pro70 each carry the 4-hydroxyproline modification. The tract at residues 31 to 101 (GIPGTPGSHG…GERGPPGLPA (71 aa)) is disordered. A compositionally biased stretch (basic and acidic residues) spans 42–51 (PGRDGRDGLK). Positions 54–70 (PGPPGPMGPPGEMPCPP) are enriched in pro residues. The 117-residue stretch at 132–248 (MTVGEKVFSS…LYSRLTICEF (117 aa)) folds into the C-type lectin domain. Cystine bridges form between Cys155–Cys246 and Cys224–Cys238. A glycan (N-linked (GlcNAc...) asparagine) is linked at Asn207.

The protein belongs to the SFTPA family. As to quaternary structure, oligomeric complex of 6 set of homotrimers. Interacts with CD93. (Microbial infection) Binds M.bovis cell surface protein Apa via its glycosylated sites; probably also recognizes other bacterial moieties. In terms of assembly, (Microbial infection) Binds to the S.aureus extracellular adherence protein, Eap, thereby enhancing phagocytosis and killing of S.aureus by alveolar macrophages. As to quaternary structure, (Microbial infection) Interacts with M.pneumoniae CARDS toxin; CARDS probably uses this protein as a receptor. Post-translationally, N-acetylated.

It localises to the secreted. The protein resides in the extracellular space. Its subcellular location is the extracellular matrix. It is found in the surface film. In presence of calcium ions, it binds to surfactant phospholipids and contributes to lower the surface tension at the air-liquid interface in the alveoli of the mammalian lung and is essential for normal respiration. Enhances the expression of MYO18A/SP-R210 on alveolar macrophages. Its function is as follows. (Microbial infection) Recognition of M.tuberculosis by dendritic cells may occur partially via this molecule. Can recognize, bind, and opsonize pathogens to enhance their elimination by alveolar macrophages. Functionally, (Microbial infection) Binds M.pneumoniae CARDS toxin, serves as one receptor for this pathogen. When SFTPA1 is down-regulated by siRNA, less toxin binds to human cells and less vacuolization (a symptom of M.pneumoniae infection) is seen. This is Pulmonary surfactant-associated protein A1 (SFTPA1) from Homo sapiens (Human).